The chain runs to 301 residues: Cell division control protein 2 homolog 1 (301 aa).

Residues 5–297 (YQRLEKIGEG…AAQALEHPYF (293 aa)) enclose the Protein kinase domain. ATP-binding positions include 11–19 (IGEGSYGVV) and K34. A Phosphoserine modification is found at S15. Y16 is modified (phosphotyrosine). D127 functions as the Proton acceptor in the catalytic mechanism. T160 carries the phosphothreonine; by CAK modification.

Belongs to the protein kinase superfamily. CMGC Ser/Thr protein kinase family. CDC2/CDKX subfamily. In terms of assembly, forms a stable but non-covalent complex with a regulatory subunit and with a cyclin.

The catalysed reaction is L-seryl-[protein] + ATP = O-phospho-L-seryl-[protein] + ADP + H(+). It catalyses the reaction L-threonyl-[protein] + ATP = O-phospho-L-threonyl-[protein] + ADP + H(+). With respect to regulation, phosphorylation at Ser-15 or Tyr-16 inactivates the enzyme, while phosphorylation at Thr-160 activates it. Functionally, probably involved in the control of the cell cycle. The protein is Cell division control protein 2 homolog 1 (CRK1) of Trypanosoma congolense.